A 266-amino-acid chain; its full sequence is Biotin--[acetyl-CoA-carboxylase] ligase (266 aa).

The BPL/LPL catalytic domain occupies 14–202; the sequence is RSLRDQLIGA…ELEARIIQWR (189 aa). Residues 38–39, glutamine 63, arginine 67, and lysine 138 each bind biotin; that span reads ST.

Belongs to the biotin--protein ligase family. Monomer in solution. Forms dimers under specific crystallization conditions.

It catalyses the reaction biotin + L-lysyl-[protein] + ATP = N(6)-biotinyl-L-lysyl-[protein] + AMP + diphosphate + H(+). The catalysed reaction is biotin + ATP + H(+) = biotinyl-5'-AMP + diphosphate. The enzyme catalyses biotinyl-5'-AMP + L-lysyl-[protein] = N(6)-biotinyl-L-lysyl-[protein] + AMP + 2 H(+). With respect to regulation, binding of biotin and ATP significantly increases the thermal stability of BirA and leads to the formation of a high affinity holoenzyme complex. Functionally, catalyzes the transfer of biotin onto a conserved lysine residue of the biotin carboxyl carrier protein (BCCP) domain of acetyl-CoA carboxylase and converts it to active holo-BCCP. Forms an acyl-adenylate intermediate. Cannot use GTP or desthiobiotin. This Mycobacterium tuberculosis (strain ATCC 25618 / H37Rv) protein is Biotin--[acetyl-CoA-carboxylase] ligase.